Reading from the N-terminus, the 187-residue chain is MLPVNDLRKGDAIILDGETYLVVDAHFHRAQQRKANVKTKLKNMLKGNMIEKTFSSTESVEEADLSYKKAQYLYEEGDSYVFMILDNYEQVHVSADILGDSKYYLLDSCEVDLQYINDEVTAVRFPIHVILEVTYTEPGFKGDTTGSTLKPAKLETGIEVNVPLFINIGDKIKVDTRDDSYVERVNK.

This sequence belongs to the elongation factor P family.

The protein localises to the cytoplasm. It participates in protein biosynthesis; polypeptide chain elongation. In terms of biological role, involved in peptide bond synthesis. Stimulates efficient translation and peptide-bond synthesis on native or reconstituted 70S ribosomes in vitro. Probably functions indirectly by altering the affinity of the ribosome for aminoacyl-tRNA, thus increasing their reactivity as acceptors for peptidyl transferase. This Brachyspira hyodysenteriae (strain ATCC 49526 / WA1) protein is Elongation factor P.